Reading from the N-terminus, the 106-residue chain is NADH dehydrogenase [ubiquinone] 1 beta subcomplex subunit 9 (106 aa).

Belongs to the complex I LYR family. Complex I is composed of about 45 different subunits.

It localises to the mitochondrion inner membrane. Accessory subunit of the mitochondrial membrane respiratory chain NADH dehydrogenase (Complex I), that is believed to be not involved in catalysis. Complex I functions in the transfer of electrons from NADH to the respiratory chain. The immediate electron acceptor for the enzyme is believed to be ubiquinone. This chain is NADH dehydrogenase [ubiquinone] 1 beta subcomplex subunit 9 (ndufb9), found in Dictyostelium discoideum (Social amoeba).